A 646-amino-acid chain; its full sequence is UvrABC system protein B (646 aa).

Residues 29–411 form the Helicase ATP-binding domain; the sequence is LEKNPEKSKQ…SNQVVEQIIR (383 aa). 42–49 lines the ATP pocket; sequence GVTGSGKT. The short motif at 95 to 118 is the Beta-hairpin element; that stretch reads YYDYYQPESYIPQKDQYIEKDAQI. The 163-residue stretch at 428 to 590 folds into the Helicase C-terminal domain; that stretch reads QVEDIIKETE…ITPQTIVKPI (163 aa). Residues 609–644 form the UVR domain; it reads PNVIVELEAEMYEAAEALEFEKAIKIRDTIAKLKKK.

Belongs to the UvrB family. In terms of assembly, forms a heterotetramer with UvrA during the search for lesions. Interacts with UvrC in an incision complex.

Its subcellular location is the cytoplasm. Functionally, the UvrABC repair system catalyzes the recognition and processing of DNA lesions. A damage recognition complex composed of 2 UvrA and 2 UvrB subunits scans DNA for abnormalities. Upon binding of the UvrA(2)B(2) complex to a putative damaged site, the DNA wraps around one UvrB monomer. DNA wrap is dependent on ATP binding by UvrB and probably causes local melting of the DNA helix, facilitating insertion of UvrB beta-hairpin between the DNA strands. Then UvrB probes one DNA strand for the presence of a lesion. If a lesion is found the UvrA subunits dissociate and the UvrB-DNA preincision complex is formed. This complex is subsequently bound by UvrC and the second UvrB is released. If no lesion is found, the DNA wraps around the other UvrB subunit that will check the other stand for damage. The sequence is that of UvrABC system protein B from Methanococcus maripaludis (strain DSM 14266 / JCM 13030 / NBRC 101832 / S2 / LL).